Here is a 118-residue protein sequence, read N- to C-terminus: UPF0344 protein RBAM_010920 (118 aa).

4 helical membrane passes run 4–24 (WHITSWVVALILVFVSYGLYG), 33–53 (ITHMILRLFYIIIILTGAELF), 62–82 (EYAGKMLLGIITIGLMEMLVI), and 93–113 (LWIGFIIVLVLTVLLGLHLPI).

Belongs to the UPF0344 family.

The protein localises to the cell membrane. The protein is UPF0344 protein RBAM_010920 of Bacillus velezensis (strain DSM 23117 / BGSC 10A6 / LMG 26770 / FZB42) (Bacillus amyloliquefaciens subsp. plantarum).